Reading from the N-terminus, the 1082-residue chain is Sodium/potassium exporting P-type ATPase 2 (1082 aa).

Topologically, residues 1–75 (MSSINTNVAE…GANTLGDGDK (75 aa)) are cytoplasmic. The chain crosses the membrane as a helical span at residues 76-96 (ISLTKIIAHQVCNAMILVLII). At 97–98 (SM) the chain is on the extracellular side. The chain crosses the membrane as a helical span at residues 99 to 119 (VIALAIKDWISGGVIGFVVLI). Topologically, residues 120 to 308 (NISVGFVQEY…VGTPLQRKLS (189 aa)) are cytoplasmic. Residues 309 to 329 (WLAIFLFWGCRYFCNYCNGIP) form a helical membrane-spanning segment. Topologically, residues 330–336 (KNRVNKE) are extracellular. Residues 337–357 (VAIYAICVALSMIPSALIVVL) traverse the membrane as a helical segment. Over 358-807 (TITMAVGAQV…RMSSNIQKFV (450 aa)) the chain is Cytoplasmic. Asp393 acts as the 4-aspartylphosphate intermediate in catalysis. Mg(2+) is bound by residues Asp393 and Thr395. Thr395, Glu499, Lys552, Arg604, Thr664, Gly665, Asp666, Arg723, and Lys729 together coordinate ATP. Mg(2+) is bound at residue Asp748. Asn751 is a binding site for ATP. Residues 808 to 828 (LQLLAENVAQALYLMVGLAFI) form a helical membrane-spanning segment. Residues 829 to 832 (DDSG) lie on the Extracellular side of the membrane. The chain crosses the membrane as a helical span at residues 833 to 853 (LSVFPLSPVEVLWILVVTSCF). The Cytoplasmic portion of the chain corresponds to 854 to 884 (PAMDLGQERASDDILEESPNSTIFTWEVIID). The chain crosses the membrane as a helical span at residues 885–905 (MIVYGFWMAVCCLVCFVIIVY). Residues 906–935 (GEGDPYLGVNCNKSSSSNSDVCELVFRGRS) are Extracellular-facing. Residues 936–956 (ASFATMTWCALILAWECIHPY) form a helical membrane-spanning segment. Residues 957-983 (NSLFYMRQDTDHPWWKQTVIDLWDNQF) lie on the Cytoplasmic side of the membrane. Residues 984–1004 (LFWSVAIGFISVFPVVYIPVI) form a helical membrane-spanning segment. Topologically, residues 1005–1007 (NTK) are extracellular. A helical membrane pass occupies residues 1008-1028 (VFLHGPIGYEWGLAVGFSILF). Topologically, residues 1029–1082 (LAGSELWKWIKRIHKRKANKKAKNPEYELERSDPFKKYASFSRSNTMDRPELMV) are cytoplasmic.

It belongs to the cation transport ATPase (P-type) (TC 3.A.3) family. Type IID subfamily. Requires Mg(2+) as cofactor. Post-translationally, the active site is phosphorylated in presence of sodium or potassium and in conditions of higher pH. Not phosphorylated in presence of calcium ions.

Its subcellular location is the cell membrane. It carries out the reaction Na(+)(in) + ATP + H2O = Na(+)(out) + ADP + phosphate + H(+). It catalyses the reaction K(+)(in) + ATP + H2O = K(+)(out) + ADP + phosphate + H(+). Catalyzes the hydrolysis of ATP coupled with the export of sodium and potassium from the cell. May be an inefficient sodium exporter. May transport other cations such as lithium. Sodium/potassium efflux ATPases are involved in salt tolerance and maintaining the membrane potential across the plasma membrane in high salinity (Na+) or alkaline (K+) environments. The chain is Sodium/potassium exporting P-type ATPase 2 from Schwanniomyces occidentalis (Yeast).